An 844-amino-acid polypeptide reads, in one-letter code: NADPH-Fe(3+) oxidoreductase subunit alpha (844 aa).

Positions 1–78 (MVSLTIDGKD…GIKVTTQSEK (78 aa)) constitute a 2Fe-2S ferredoxin-type domain. Positions 34, 45, 48, and 62 each coordinate [2Fe-2S] cluster. The 40-residue stretch at 78-117 (KLSRIRQKIMELMLVNHPLDCPVCDAGGECDLQNACYGLG) folds into the 4Fe-4S His(Cys)3-ligated-type domain. Positions 94, 98, 101, 107, 146, 149, 152, 186, 189, 192, 196, 222, 225, 229, and 256 each coordinate [4Fe-4S] cluster. 4Fe-4S ferredoxin-type domains follow at residues 137–168 (PLIE…IRVV) and 177–206 (DTVD…SKPF). The 4Fe-4S Mo/W bis-MGD-type domain maps to 215-270 (FTTTPSVCPFCATGCQIEYHSRNGRVERVTSDDSTYNSGNLCINGRFGYSYINSPD).

Heterotetramer with 2 beta subunits. [4Fe-4S] cluster is required as a cofactor.

It localises to the cell inner membrane. Its activity is regulated as follows. Not regulated by FAD or FMN. Functionally, the SfrAB enzymatic complex is probably involved in acetate metabolism and does not participate directly in the reduction of Fe(3+) chelates. May serve as a major route for NADP regeneration. The chain is NADPH-Fe(3+) oxidoreductase subunit alpha (sfrA) from Geobacter sulfurreducens (strain DL-1 / KN400).